Reading from the N-terminus, the 215-residue chain is uncharacterized protein (215 aa).

It belongs to the HAD-like hydrolase superfamily. CbbY/CbbZ/Gph/YieH family.

This is an uncharacterized protein from Lacticaseibacillus casei (Lactobacillus casei).